The sequence spans 598 residues: Protein VASCULAR ASSOCIATED DEATH 1, chloroplastic (598 aa).

Over residues 1 to 11 (MAMLSTASVSG) the composition is skewed to polar residues. The segment at 1-64 (MAMLSTASVS…PSRGGDNQSE (64 aa)) is disordered. The N-terminal 68 residues, 1-68 (MAMLSTASVS…GDNQSEVISK (68 aa)), are a transit peptide targeting the chloroplast. N-linked (GlcNAc...) asparagine glycosylation is present at Asn-61. Residues 70-134 (EEYRQLFRLP…PFAEISCVKR (65 aa)) form the GRAM domain. One can recognise a VASt domain in the interval 272 to 444 (DFTKVAEAKF…MAHELLKQKK (173 aa)). 2 N-linked (GlcNAc...) asparagine glycosylation sites follow: Asn-329 and Asn-494. Residues 507-527 (QVIVLAFAVILLMQVTIVVLL) form a helical membrane-spanning segment. Residues 553-595 (WLEKRMHFLREEMMMVEDRLQRMRQDHAALKAQFHHLERLLRR) are a coiled coil.

It localises to the membrane. The protein localises to the plastid. It is found in the chloroplast. In terms of biological role, involved in ethylene- and salicylic acid-dependent cell death control associated with cells in the vicinity of vascular bundles. This Arabidopsis thaliana (Mouse-ear cress) protein is Protein VASCULAR ASSOCIATED DEATH 1, chloroplastic.